A 693-amino-acid chain; its full sequence is Alpha-glucosidase (693 aa).

Catalysis depends on residues Asp-320 and Glu-323. Asp-416 serves as the catalytic Proton donor.

The protein belongs to the glycosyl hydrolase 31 family.

It is found in the cytoplasm. It carries out the reaction Hydrolysis of terminal, non-reducing (1-&gt;4)-linked alpha-D-glucose residues with release of alpha-D-glucose.. Functionally, major soluble alpha-glucosidase. This is Alpha-glucosidase (malA) from Saccharolobus solfataricus (strain ATCC 35092 / DSM 1617 / JCM 11322 / P2) (Sulfolobus solfataricus).